A 475-amino-acid chain; its full sequence is Ribulose bisphosphate carboxylase large chain (475 aa).

Residues 1–2 constitute a propeptide that is removed on maturation; that stretch reads MS. Residue Pro3 is modified to N-acetylproline. Position 14 is an N6,N6,N6-trimethyllysine (Lys14). Substrate contacts are provided by Asn123 and Thr173. Lys175 acts as the Proton acceptor in catalysis. Lys177 contributes to the substrate binding site. Lys201, Asp203, and Glu204 together coordinate Mg(2+). Lys201 bears the N6-carboxylysine mark. The active-site Proton acceptor is His294. Residues Arg295, His327, and Ser379 each contribute to the substrate site.

This sequence belongs to the RuBisCO large chain family. Type I subfamily. As to quaternary structure, heterohexadecamer of 8 large chains and 8 small chains; disulfide-linked. The disulfide link is formed within the large subunit homodimers. Mg(2+) is required as a cofactor. Post-translationally, the disulfide bond which can form in the large chain dimeric partners within the hexadecamer appears to be associated with oxidative stress and protein turnover.

Its subcellular location is the plastid. The protein resides in the chloroplast. It carries out the reaction 2 (2R)-3-phosphoglycerate + 2 H(+) = D-ribulose 1,5-bisphosphate + CO2 + H2O. It catalyses the reaction D-ribulose 1,5-bisphosphate + O2 = 2-phosphoglycolate + (2R)-3-phosphoglycerate + 2 H(+). Its function is as follows. RuBisCO catalyzes two reactions: the carboxylation of D-ribulose 1,5-bisphosphate, the primary event in carbon dioxide fixation, as well as the oxidative fragmentation of the pentose substrate in the photorespiration process. Both reactions occur simultaneously and in competition at the same active site. This is Ribulose bisphosphate carboxylase large chain from Tsuga heterophylla (Western hemlock).